Consider the following 960-residue polypeptide: Isoleucine--tRNA ligase (960 aa).

Residues 82–92 carry the 'HIGH' region motif; the sequence is PYANGHIHIGH. Glutamate 606 lines the L-isoleucyl-5'-AMP pocket. The 'KMSKS' region motif lies at 647-651; it reads KMSKS. ATP is bound at residue lysine 650. Residues cysteine 931, cysteine 934, cysteine 951, and cysteine 954 each contribute to the Zn(2+) site.

The protein belongs to the class-I aminoacyl-tRNA synthetase family. IleS type 1 subfamily. In terms of assembly, monomer. Requires Zn(2+) as cofactor.

The protein localises to the cytoplasm. The enzyme catalyses tRNA(Ile) + L-isoleucine + ATP = L-isoleucyl-tRNA(Ile) + AMP + diphosphate. Its function is as follows. Catalyzes the attachment of isoleucine to tRNA(Ile). As IleRS can inadvertently accommodate and process structurally similar amino acids such as valine, to avoid such errors it has two additional distinct tRNA(Ile)-dependent editing activities. One activity is designated as 'pretransfer' editing and involves the hydrolysis of activated Val-AMP. The other activity is designated 'posttransfer' editing and involves deacylation of mischarged Val-tRNA(Ile). In Gluconobacter oxydans (strain 621H) (Gluconobacter suboxydans), this protein is Isoleucine--tRNA ligase.